An 846-amino-acid polypeptide reads, in one-letter code: Translation initiation factor IF-2 (846 aa).

The region spanning 345–512 (SRAPVVTIMG…AVLLQSEVLE (168 aa)) is the tr-type G domain. Positions 354–361 (GHVDHGKT) are G1. 354–361 (GHVDHGKT) is a GTP binding site. Residues 379-383 (GITQH) are G2. The segment at 400 to 403 (DTPG) is G3. GTP-binding positions include 400–404 (DTPGH) and 454–457 (NKID). The G4 stretch occupies residues 454 to 457 (NKID). Residues 490–492 (SAK) form a G5 region.

Belongs to the TRAFAC class translation factor GTPase superfamily. Classic translation factor GTPase family. IF-2 subfamily.

The protein resides in the cytoplasm. Functionally, one of the essential components for the initiation of protein synthesis. Protects formylmethionyl-tRNA from spontaneous hydrolysis and promotes its binding to the 30S ribosomal subunits. Also involved in the hydrolysis of GTP during the formation of the 70S ribosomal complex. The polypeptide is Translation initiation factor IF-2 (Francisella tularensis subsp. holarctica (strain FTNF002-00 / FTA)).